Reading from the N-terminus, the 415-residue chain is Tyrosine--tRNA ligase (415 aa).

Tyr34 is a binding site for L-tyrosine. The short motif at 39–48 (PTADSLHLGH) is the 'HIGH' region element. Residues Tyr164 and Gln168 each coordinate L-tyrosine. The short motif at 226-230 (KFGKS) is the 'KMSKS' region element. ATP is bound at residue Lys229. The region spanning 348–415 (KNIVDFLVDG…KKKYFLGKIK (68 aa)) is the S4 RNA-binding domain.

Belongs to the class-I aminoacyl-tRNA synthetase family. TyrS type 1 subfamily. Homodimer.

It is found in the cytoplasm. The catalysed reaction is tRNA(Tyr) + L-tyrosine + ATP = L-tyrosyl-tRNA(Tyr) + AMP + diphosphate + H(+). Catalyzes the attachment of tyrosine to tRNA(Tyr) in a two-step reaction: tyrosine is first activated by ATP to form Tyr-AMP and then transferred to the acceptor end of tRNA(Tyr). In Leuconostoc citreum (strain KM20), this protein is Tyrosine--tRNA ligase.